The following is an 88-amino-acid chain: Mitochondrial import inner membrane translocase subunit Tim10 (88 aa).

The Twin CX3C motif signature appears at 29 to 54 (CHRKCVPPHYKEAELSKGEAVCLDRC). 2 disulfide bridges follow: Cys-29–Cys-54 and Cys-33–Cys-50.

The protein belongs to the small Tim family. As to quaternary structure, heterohexamer; composed of 3 copies of TIMM9 and 3 copies of TIMM10/TIM10A, named soluble 70 kDa complex. The complex forms a 6-bladed alpha-propeller structure and associates with the TIMM22 component of the TIM22 complex. Interacts with multi-pass transmembrane proteins in transit.

The protein localises to the mitochondrion inner membrane. In terms of biological role, mitochondrial intermembrane chaperone that participates in the import and insertion of multi-pass transmembrane proteins into the mitochondrial inner membrane. May also be required for the transfer of beta-barrel precursors from the TOM complex to the sorting and assembly machinery (SAM complex) of the outer membrane. Acts as a chaperone-like protein that protects the hydrophobic precursors from aggregation and guide them through the mitochondrial intermembrane space. In Danio rerio (Zebrafish), this protein is Mitochondrial import inner membrane translocase subunit Tim10 (timm10).